The primary structure comprises 534 residues: 5'-nucleotidase domain-containing protein 3 (534 aa).

Asp104 acts as the Nucleophile in catalysis. 2 residues coordinate Mg(2+): Asp104 and Asp106. Asp106 serves as the catalytic Proton donor. 234-242 is a binding site for substrate; sequence KEAIRDVHV. Asp372 contributes to the Mg(2+) binding site.

It belongs to the 5'(3')-deoxyribonucleotidase family. Mg(2+) is required as a cofactor.

The polypeptide is 5'-nucleotidase domain-containing protein 3 (nt5dc3) (Xenopus tropicalis (Western clawed frog)).